The following is a 483-amino-acid chain: Bifunctional pantoate ligase/cytidylate kinase (483 aa).

A pantoate--beta-alanine ligase region spans residues M1–A246. Position 4–11 (M4–H11) interacts with ATP. H11 acts as the Proton donor in catalysis. Residue Q34 coordinates (R)-pantoate. Beta-alanine is bound at residue Q34. Residue G124–D127 coordinates ATP. Q130 contacts (R)-pantoate. ATP contacts are provided by residues V153 and L161–R164. Residues F247–R483 form a cytidylate kinase region.

In the N-terminal section; belongs to the pantothenate synthetase family. This sequence in the C-terminal section; belongs to the cytidylate kinase family. Type 1 subfamily.

It is found in the cytoplasm. It carries out the reaction (R)-pantoate + beta-alanine + ATP = (R)-pantothenate + AMP + diphosphate + H(+). It catalyses the reaction CMP + ATP = CDP + ADP. The catalysed reaction is dCMP + ATP = dCDP + ADP. It functions in the pathway cofactor biosynthesis; (R)-pantothenate biosynthesis; (R)-pantothenate from (R)-pantoate and beta-alanine: step 1/1. Catalyzes the condensation of pantoate with beta-alanine in an ATP-dependent reaction via a pantoyl-adenylate intermediate. Functionally, catalyzes the transfer of a phosphate group from ATP to either CMP or dCMP to form CDP or dCDP and ADP, respectively. This Synechococcus sp. (strain CC9902) protein is Bifunctional pantoate ligase/cytidylate kinase.